Here is a 289-residue protein sequence, read N- to C-terminus: MRILEKAPAKINLSLDVTRKRPDGYHEVEMIMTTIDLADRIELTELAEDEVRVSSHNRFVPDDQRNLAYQAAKLIKDRYNVKKGVSIMITKVIPVAAGLAGGSSDAAATLRGLNRLWNLNLSAETLAELGAEIGSDVSFCVYGGTALATGRGEKIKHISTPPHCWVILAKPTIGVSTAEVYRALKLDGIEHPDVQGMIEAIEEKSFQKMCSRLGNVLESVTLDMHPEVAMIKNQMKRFGADAVLMSGSGPTVFGLVQYESKVQRIYNGLRGFCDQVYAVRMIGEQNALD.

Lys-10 is a catalytic residue. 94–104 (PVAAGLAGGSS) is a binding site for ATP. Residue Asp-136 is part of the active site.

Belongs to the GHMP kinase family. IspE subfamily.

It carries out the reaction 4-CDP-2-C-methyl-D-erythritol + ATP = 4-CDP-2-C-methyl-D-erythritol 2-phosphate + ADP + H(+). It participates in isoprenoid biosynthesis; isopentenyl diphosphate biosynthesis via DXP pathway; isopentenyl diphosphate from 1-deoxy-D-xylulose 5-phosphate: step 3/6. Its function is as follows. Catalyzes the phosphorylation of the position 2 hydroxy group of 4-diphosphocytidyl-2C-methyl-D-erythritol. This Bacillus subtilis (strain 168) protein is 4-diphosphocytidyl-2-C-methyl-D-erythritol kinase (ispE).